A 477-amino-acid chain; its full sequence is MTKKLFIKTWGCQMNEYDSQKMADLLDSTHGYQVADTAEEADIILLNTCSIREKAQEKVFHQLGRWKNLKQDKPELIIGVGGCVASQEGQVIRQRAPFVDLVFGPQTLHRLPEMINQIKGGSSSVIDISFPEIEKFDRLPEPKAEGPTAFVSIMEGCSKYCTFCVVPYTRGEEVSRPVDDVLLEVAQLAEQGVREVNLLGQNVNAFRGPHHDGAICTFAELLEMVASIDGIDRIRYTTSHPVEFTDDIIDAYATIPELVDHLHLPVQSGSDRVLNLMKRGHTAIEYKSKIRKLRKIRPNLSMSSDFIIGFPGETDDDFEATMDLIQAMDFDLSFSFIYSARPGTPAADLPDDVSETTKKERLQLLQNRITQQALRIARNMIDSEQRVLVEGPSKKNPMELSGRTENNRVVNFEGTPDMIGGFVDVKITDVFANSLRGDVLRKEADMNLRINVAPQAILAKQTNKTDALGVAQFVPAH.

Residues 3-120 (KKLFIKTWGC…LPEMINQIKG (118 aa)) form the MTTase N-terminal domain. [4Fe-4S] cluster is bound by residues cysteine 12, cysteine 49, cysteine 83, cysteine 157, cysteine 161, and cysteine 164. The 233-residue stretch at 143–375 (KAEGPTAFVS…QNRITQQALR (233 aa)) folds into the Radical SAM core domain. Residues 378-441 (RNMIDSEQRV…ANSLRGDVLR (64 aa)) form the TRAM domain.

It belongs to the methylthiotransferase family. MiaB subfamily. As to quaternary structure, monomer. The cofactor is [4Fe-4S] cluster.

The protein localises to the cytoplasm. The catalysed reaction is N(6)-dimethylallyladenosine(37) in tRNA + (sulfur carrier)-SH + AH2 + 2 S-adenosyl-L-methionine = 2-methylsulfanyl-N(6)-dimethylallyladenosine(37) in tRNA + (sulfur carrier)-H + 5'-deoxyadenosine + L-methionine + A + S-adenosyl-L-homocysteine + 2 H(+). Functionally, catalyzes the methylthiolation of N6-(dimethylallyl)adenosine (i(6)A), leading to the formation of 2-methylthio-N6-(dimethylallyl)adenosine (ms(2)i(6)A) at position 37 in tRNAs that read codons beginning with uridine. The sequence is that of tRNA-2-methylthio-N(6)-dimethylallyladenosine synthase from Pseudoalteromonas atlantica (strain T6c / ATCC BAA-1087).